The sequence spans 402 residues: Bone morphogenetic protein 8A (402 aa).

Residues 1–19 (MAARPGPLWLLGLTLCALG) form the signal peptide. Positions 20-263 (GGGPGLRPPP…ASPSPIRTPR (244 aa)) are excised as a propeptide. N-linked (GlcNAc...) asparagine glycosylation is found at Asn158 and Asn343. 3 disulfides stabilise this stretch: Cys301–Cys367, Cys330–Cys399, and Cys334–Cys401.

The protein belongs to the TGF-beta family. As to quaternary structure, homodimer; disulfide-linked.

It localises to the secreted. Induces cartilage and bone formation. May be the osteoinductive factor responsible for the phenomenon of epithelial osteogenesis. Plays a role in calcium regulation and bone homeostasis. Signaling protein involved in regulation of thermogenesis and energy balance. Proposed to increase the peripheral response of brown adipose tissue (BAT) to adrenergic stimulation while acting centrally in the hypothalamus to increase sympathetic output to BAT. Its function is as follows. Growth factor of the TGF-beta superfamily that plays important role in various biological processes, including spermatogenesis, osteogenesis, steroidogenesis as well as regulation of energy balance. Initiates the canonical BMP signaling cascade by associating with type I receptor BMPR1A and type II receptor BMPR2. Once all three components are bound together in a complex at the cell surface, BMPR2 phosphorylates and activates BMPR1A. In turn, BMPR1A propagates signal by phosphorylating SMAD1/5/8 that travel to the nucleus and act as activators and repressors of transcription of target genes. In addition, activates the SMAD2/3 pathway. This is Bone morphogenetic protein 8A (BMP8A) from Homo sapiens (Human).